A 329-amino-acid polypeptide reads, in one-letter code: MALPEFTMRQLLEAGVHFGHQSHRWNPKMADYIFGARNNIHIIDLAQTVPLLHTALQAVSDTVAKGGRILFVGTKRQAQDNVADAAKRCAQYFVNSRWLGGTLTNWKTISASIKRLRHLDEVLSSGEANSYTKKERLTLQRERDKLDRSLGGIKDMGGLPDMIFVIDTNKEDIAIQEAQRLNIPVAAIVDTNCDPKGITYVVPGNDDAGRAISLYCDLIARAAIDGISRAQGELGIDVGASAAPLEEDLPAASASTFQGLPGPRGTADDLKKLTGVSGAIEKKLNDLGIFHFWQLAELNHDTAHQIGEEVGLPSRADAWVAQAKSLADA.

It belongs to the universal ribosomal protein uS2 family.

The sequence is that of Small ribosomal subunit protein uS2 from Bradyrhizobium sp. (strain ORS 278).